Consider the following 258-residue polypeptide: Venom plasminogen activator GPV-PA (258 aa).

Positions 1 to 18 (MVLIRVLANLLILQLSYA) are cleaved as a signal peptide. Residues 19 to 24 (QKSSEL) constitute a propeptide that is removed on maturation. In terms of domain architecture, Peptidase S1 spans 25 to 249 (VFGGRPCNIN…YTDWIQSIIA (225 aa)). 6 cysteine pairs are disulfide-bonded: C31-C163, C50-C66, C98-C256, C142-C210, C174-C189, and C200-C225. A glycan (N-linked (GlcNAc...) asparagine) is linked at N44. Active-site charge relay system residues include H65 and D110. N121 and N185 each carry an N-linked (GlcNAc...) asparagine glycan. S204 serves as the catalytic Charge relay system.

The protein belongs to the peptidase S1 family. Snake venom subfamily. Monomer. As to expression, expressed by the venom gland.

The protein resides in the secreted. Snake venom serine protease that activates plasminogen. This is Venom plasminogen activator GPV-PA from Trimeresurus albolabris (White-lipped pit viper).